We begin with the raw amino-acid sequence, 84 residues long: Cell division topological specificity factor (84 aa).

It belongs to the MinE family.

Prevents the cell division inhibition by proteins MinC and MinD at internal division sites while permitting inhibition at polar sites. This ensures cell division at the proper site by restricting the formation of a division septum at the midpoint of the long axis of the cell. The sequence is that of Cell division topological specificity factor from Ralstonia nicotianae (strain ATCC BAA-1114 / GMI1000) (Ralstonia solanacearum).